A 197-amino-acid polypeptide reads, in one-letter code: MATPTKVSAVAEITNDFKESNAAVLTEYRGLTVAQLKQLRVSLGQDTKFAVVKNTLTAIAAKEAGVEAFDGQLAGPTAIAFIKGDAVAAAKSLTDFAKANKQLVIKTGYFEGKALDASEVAALAALESRELQLAKVAGVLKAPAAAAARIIDALRLKLEEENGAPAAAEAPAAEESADSAAEAAAEAPAEAPAAEEN.

Residues 163-197 form a disordered region; sequence GAPAAAEAPAAEESADSAAEAAAEAPAEAPAAEEN.

Belongs to the universal ribosomal protein uL10 family. As to quaternary structure, part of the ribosomal stalk of the 50S ribosomal subunit. The N-terminus interacts with L11 and the large rRNA to form the base of the stalk. The C-terminus forms an elongated spine to which L12 dimers bind in a sequential fashion forming a multimeric L10(L12)X complex.

Functionally, forms part of the ribosomal stalk, playing a central role in the interaction of the ribosome with GTP-bound translation factors. The chain is Large ribosomal subunit protein uL10 from Pseudarthrobacter chlorophenolicus (strain ATCC 700700 / DSM 12829 / CIP 107037 / JCM 12360 / KCTC 9906 / NCIMB 13794 / A6) (Arthrobacter chlorophenolicus).